The sequence spans 333 residues: MSNDTQPKIAIIGYGSQGRAHALNLRDSGFDVTVGLRAGGPTEAKAQADGFIVVAPSEAVKSADLVAILTPDMVQKKLYEEVIAPNMKQGACLLFAHGLNVHFDMIKPRADLDVVLVAPKGPGALVRREYEIGRGVPCIYAVYQDTSGKAEQFALTYAGGLGGARANIIKTTFKEETETDLFGEQAVLCGGASSLVQAGFEVLVEAGYQPEIAYYEVLHELKLIVDLFYEGGITRMLEFVSETAQYGDYVSGPRVIDAGTKARMKDVLTDIQNGTFTKNWVAEYDAGLPNYNKFKQADLEHPIEEVGKKLRAKMVWLNGQQQAAAAPANQQAA.

Positions 1–171 constitute a KARI N-terminal Rossmann domain; the sequence is MSNDTQPKIA…GGARANIIKT (171 aa). Residues 14–17, R37, T42, and 72–75 each bind NADP(+); these read YGSQ and DMVQ. The active site involves H97. Residue G123 coordinates NADP(+). The 146-residue stretch at 172–317 folds into the KARI C-terminal knotted domain; it reads TFKEETETDL…KKLRAKMVWL (146 aa). Residues D180, E184, E216, and E220 each contribute to the Mg(2+) site. S241 provides a ligand contact to substrate.

This sequence belongs to the ketol-acid reductoisomerase family. Mg(2+) serves as cofactor.

The catalysed reaction is (2R)-2,3-dihydroxy-3-methylbutanoate + NADP(+) = (2S)-2-acetolactate + NADPH + H(+). The enzyme catalyses (2R,3R)-2,3-dihydroxy-3-methylpentanoate + NADP(+) = (S)-2-ethyl-2-hydroxy-3-oxobutanoate + NADPH + H(+). It functions in the pathway amino-acid biosynthesis; L-isoleucine biosynthesis; L-isoleucine from 2-oxobutanoate: step 2/4. Its pathway is amino-acid biosynthesis; L-valine biosynthesis; L-valine from pyruvate: step 2/4. Functionally, involved in the biosynthesis of branched-chain amino acids (BCAA). Catalyzes an alkyl-migration followed by a ketol-acid reduction of (S)-2-acetolactate (S2AL) to yield (R)-2,3-dihydroxy-isovalerate. In the isomerase reaction, S2AL is rearranged via a Mg-dependent methyl migration to produce 3-hydroxy-3-methyl-2-ketobutyrate (HMKB). In the reductase reaction, this 2-ketoacid undergoes a metal-dependent reduction by NADPH to yield (R)-2,3-dihydroxy-isovalerate. In Xanthomonas euvesicatoria pv. vesicatoria (strain 85-10) (Xanthomonas campestris pv. vesicatoria), this protein is Ketol-acid reductoisomerase (NADP(+)).